A 72-amino-acid polypeptide reads, in one-letter code: Translation initiation factor IF-1 (72 aa).

Positions 1-72 (MAKDDVIEIQ…TKGRITYRFK (72 aa)) constitute an S1-like domain.

It belongs to the IF-1 family. As to quaternary structure, component of the 30S ribosomal translation pre-initiation complex which assembles on the 30S ribosome in the order IF-2 and IF-3, IF-1 and N-formylmethionyl-tRNA(fMet); mRNA recruitment can occur at any time during PIC assembly.

The protein resides in the cytoplasm. Its function is as follows. One of the essential components for the initiation of protein synthesis. Stabilizes the binding of IF-2 and IF-3 on the 30S subunit to which N-formylmethionyl-tRNA(fMet) subsequently binds. Helps modulate mRNA selection, yielding the 30S pre-initiation complex (PIC). Upon addition of the 50S ribosomal subunit IF-1, IF-2 and IF-3 are released leaving the mature 70S translation initiation complex. In Lacticaseibacillus paracasei (strain ATCC 334 / BCRC 17002 / CCUG 31169 / CIP 107868 / KCTC 3260 / NRRL B-441) (Lactobacillus paracasei), this protein is Translation initiation factor IF-1.